The primary structure comprises 757 residues: Endonuclease MutS2 (757 aa).

321 to 328 (GPNMGGKT) is an ATP binding site. In terms of domain architecture, Smr spans 681–756 (IDIRGMTVEE…GTGVTVVEVK (76 aa)).

The protein belongs to the DNA mismatch repair MutS family. MutS2 subfamily. As to quaternary structure, homodimer. Binds to stalled ribosomes, contacting rRNA. Interacts with MutL.

Nuclease activity is stimulated by interaction with MutL and inhibited in the presence of non-hydrolytic ATP (ADPnP). ATPase activity is stimulated by DNA. Endonuclease that is involved in the suppression of homologous recombination and thus may have a key role in the control of bacterial genetic diversity. Has ATPase activity. Binds to DNA. Functionally, acts as a ribosome collision sensor, splitting the ribosome into its 2 subunits. Detects stalled/collided 70S ribosomes which it binds and splits by an ATP-hydrolysis driven conformational change. Acts upstream of the ribosome quality control system (RQC), a ribosome-associated complex that mediates the extraction of incompletely synthesized nascent chains from stalled ribosomes and their subsequent degradation. Probably generates substrates for RQC. The sequence is that of Endonuclease MutS2 from Thermotoga maritima (strain ATCC 43589 / DSM 3109 / JCM 10099 / NBRC 100826 / MSB8).